The following is a 201-amino-acid chain: Prostamide/prostaglandin F synthase (201 aa).

This sequence belongs to the peroxiredoxin-like PRXL2 family. Prostamide/prostaglandin F synthase subfamily.

Its subcellular location is the cytoplasm. The protein localises to the cytosol. The catalysed reaction is prostaglandin H2 + [thioredoxin]-dithiol = prostaglandin F2alpha + [thioredoxin]-disulfide. It carries out the reaction prostamide F2alpha + [thioredoxin]-disulfide = prostamide H2 + [thioredoxin]-dithiol. In terms of biological role, catalyzes the reduction of prostaglandin-ethanolamide H(2) (prostamide H(2)) to prostamide F(2alpha) with NADPH as proton donor. Also able to reduce prostaglandin H(2) to prostaglandin F(2alpha). The sequence is that of Prostamide/prostaglandin F synthase (prxl2b) from Aquarana catesbeiana (American bullfrog).